Consider the following 531-residue polypeptide: Large neutral amino acids transporter small subunit 2 (531 aa).

Residues 1-29 (MEKGARQRNNTAKNHPGSDTSPEAEASSG) form a disordered region. The Cytoplasmic segment spans residues 1–43 (MEKGARQRNNTAKNHPGSDTSPEAEASSGGGGVALKKEIGLVS). Residues 7-21 (QRNNTAKNHPGSDTS) show a composition bias toward polar residues. A phosphoserine mark is found at Ser18, Ser21, Ser27, and Ser28. The chain crosses the membrane as a helical span at residues 44 to 64 (ACGIIVGNIIGSGIFVSPKGV). Ile52 serves as a coordination point for L-leucine. Topologically, residues 65–72 (LENAGSVG) are extracellular. Residues 73-94 (LALIVWIVTGIITAVGALCYAE) traverse the membrane as a helical segment. Residues 95 to 115 (LGVTIPKSGGDYSYVKDIFGG) are Cytoplasmic-facing. Residues 116–148 (LAGFLRLWIAVLVIYPTNQAVIALTFSNYVLQP) form a helical membrane-spanning segment. Position 133 (Asn133) interacts with L-tryptophan. Residues 149–156 (LFPTCFPP) are Extracellular-facing. The chain crosses the membrane as a helical span at residues 157-177 (ESGLRLLAAICLLLLTWVNCS). The Cytoplasmic segment spans residues 178-180 (SVR). Residues 181–209 (WATRVQDIFTAGKLLALALIIIMGIVQIC) form a helical membrane-spanning segment. Over 210–229 (KGEFFWLEPKNAFENFQEPD) the chain is Extracellular. Residues 230 to 251 (IGLVALAFLQGSFAYGGWNFLN) form a helical membrane-spanning segment. Gly245 contacts L-leucine. The Cytoplasmic segment spans residues 252 to 264 (YVTEELVDPYKNL). Residues 265–286 (PRAIFISIPLVTFVYVFANIAY) traverse the membrane as a helical segment. At 287 to 311 (VTAMSPQELLASNAVAVTFGEKLLG) the chain is on the extracellular side. A helical membrane pass occupies residues 312-337 (VMAWIMPISVALSTFGGVNGSLFTSS). Residues 338–363 (RLFFAGAREGHLPSVLAMIHVKRCTP) are Cytoplasmic-facing. The chain crosses the membrane as a helical span at residues 364 to 381 (IPALLFTCLSTLLMLVTS). Residues 382–385 (DMYT) lie on the Extracellular side of the membrane. Residues 386–407 (LINYVGFINYLFYGVTVAGQIV) form a helical membrane-spanning segment. Position 394 (Asn394) interacts with L-tryptophan. Residues 408–422 (LRWKKPDIPRPIKVS) are Cytoplasmic-facing. The next 2 helical transmembrane spans lie at 423–445 (LLFP…WSEP) and 446–465 (VVCG…YFLG). The Cytoplasmic portion of the chain corresponds to 466 to 531 (VYWQHKPKCF…VKDPDSEEQP (66 aa)). Residues 499-531 (NSGAEETTDDLEEQHKPIFKPTPVKDPDSEEQP) form a disordered region. Ser527 is subject to Phosphoserine.

This sequence belongs to the amino acid-polyamine-organocation (APC) superfamily. L-type amino acid transporter (LAT) (TC 2.A.3.8) family. As to quaternary structure, disulfide-linked heterodimer composed of the catalytic light chain subunit SLC7A8 and the heavy chain subunit SLC3A2. SLC3A2 acts as a chaperone for correct plasma membrane trafficking and stabilization of SLC7A8 and modulates the substrate affinity and specificity of SLC7A8. ICAM-1 associates with the heterodimer SLC3A2/SLC7A8; facilitates leucine uptake. In terms of tissue distribution, strongly expressed in kidney and small intestine. Moderately present in placenta, ovary and brain. Expressed in the inner ear.

It localises to the cell membrane. It is found in the basolateral cell membrane. It carries out the reaction L-histidine(in) + L-phenylalanine(out) = L-histidine(out) + L-phenylalanine(in). The enzyme catalyses L-tryptophan(in) + L-phenylalanine(out) = L-tryptophan(out) + L-phenylalanine(in). The catalysed reaction is L-isoleucine(in) + L-phenylalanine(out) = L-isoleucine(out) + L-phenylalanine(in). It catalyses the reaction L-valine(in) + L-phenylalanine(out) = L-valine(out) + L-phenylalanine(in). It carries out the reaction L-leucine(in) + L-phenylalanine(out) = L-leucine(out) + L-phenylalanine(in). The enzyme catalyses L-glutamine(in) + L-phenylalanine(out) = L-glutamine(out) + L-phenylalanine(in). The catalysed reaction is L-cysteine(in) + L-phenylalanine(out) = L-cysteine(out) + L-phenylalanine(in). It catalyses the reaction L-phenylalanine(out) + L-methionine(in) = L-phenylalanine(in) + L-methionine(out). It carries out the reaction L-leucine(out) + L-methionine(in) = L-leucine(in) + L-methionine(out). The enzyme catalyses L-cysteine(out) + L-methionine(in) = L-cysteine(in) + L-methionine(out). The catalysed reaction is S-methylmercury-L-cysteine(out) + L-methionine(in) = S-methylmercury-L-cysteine(in) + L-methionine(out). It catalyses the reaction S-methylmercury-L-cysteine(in) + L-leucine(out) = S-methylmercury-L-cysteine(out) + L-leucine(in). It carries out the reaction S-methylmercury-L-cysteine(in) + L-phenylalanine(out) = S-methylmercury-L-cysteine(out) + L-phenylalanine(in). The enzyme catalyses L-phenylalanine(out) + L-serine(in) = L-phenylalanine(in) + L-serine(out). The catalysed reaction is L-phenylalanine(out) + glycine(in) = L-phenylalanine(in) + glycine(out). It catalyses the reaction L-phenylalanine(out) + L-alanine(in) = L-phenylalanine(in) + L-alanine(out). It carries out the reaction L-tryptophan(in) = L-tryptophan(out). The enzyme catalyses 3,3',5-triiodo-L-thyronine(out) = 3,3',5-triiodo-L-thyronine(in). The catalysed reaction is 3,3'-diiodo-L-thyronine(out) = 3,3'-diiodo-L-thyronine(in). It catalyses the reaction L-dopa(out) + L-phenylalanine(in) = L-dopa(in) + L-phenylalanine(out). Functionally, associates with SLC3A2 to form a functional heterodimeric complex that translocates small and large neutral amino acids with broad specificity and a stoichiometry of 1:1. Functions as amino acid antiporter mediating the influx of extracellular essential amino acids mainly in exchange with the efflux of highly concentrated intracellular amino acids. Has relatively symmetrical selectivities but strongly asymmetrical substrate affinities at both the intracellular and extracellular sides of the transporter. This asymmetry allows SLC7A8 to regulate intracellular amino acid pools (mM concentrations) by exchange with external amino acids (uM concentration range), equilibrating the relative concentrations of different amino acids across the plasma membrane instead of mediating their net uptake. May play an essential role in the reabsorption of neutral amino acids from the epithelial cells to the bloodstream in the kidney. Involved in the uptake of methylmercury (MeHg) when administered as the L-cysteine or D,L-homocysteine complexes, and hence plays a role in metal ion homeostasis and toxicity. Involved in the cellular activity of small molecular weight nitrosothiols, via the stereoselective transport of L-nitrosocysteine (L-CNSO) across the transmembrane. Imports the thyroid hormone diiodothyronine (T2) and to a smaller extent triiodothyronine (T3) but not rT 3 or thyroxine (T4). Mediates the uptake of L-DOPA. May participate in auditory function. This chain is Large neutral amino acids transporter small subunit 2 (Slc7a8), found in Mus musculus (Mouse).